The chain runs to 521 residues: Acetylcholine receptor subunit delta (521 aa).

The first 21 residues, 1–21 (MAWIWISLLLPILIYFPGCFS), serve as a signal peptide directing secretion. Residues 22 to 247 (ESEEERLLNH…ITFYLIIERK (226 aa)) are Extracellular-facing. N-linked (GlcNAc...) asparagine glycans are attached at residues asparagine 53 and asparagine 164. Cysteine 151 and cysteine 165 form a disulfide bridge. Helical transmembrane passes span 248–272 (PLFY…VFYL), 280–297 (MTLA…LLLI), and 314–335 (YLMF…VLNL). Over 336–475 (HFRTPSTHAI…WYRIARTVDR (140 aa)) the chain is Cytoplasmic. A Phosphotyrosine; by Tyr-kinases modification is found at tyrosine 394. Residues 476 to 494 (LCLFLVTPVMIIGTLWIFL) traverse the membrane as a helical segment.

It belongs to the ligand-gated ion channel (TC 1.A.9) family. Acetylcholine receptor (TC 1.A.9.1) subfamily. Pentamer of two alpha chains, and one each of the beta, delta, and gamma (in immature muscle) or epsilon (in mature muscle) chains.

It is found in the postsynaptic cell membrane. It localises to the cell membrane. It carries out the reaction K(+)(in) = K(+)(out). It catalyses the reaction Na(+)(in) = Na(+)(out). After binding acetylcholine, the AChR responds by an extensive change in conformation that affects all subunits and leads to opening of an ion-conducting channel across the plasma membrane. The polypeptide is Acetylcholine receptor subunit delta (chrnd) (Xenopus laevis (African clawed frog)).